Reading from the N-terminus, the 322-residue chain is Phosphatidylserine decarboxylase proenzyme (322 aa).

Residues D90, H147, and S254 each act as charge relay system; for autoendoproteolytic cleavage activity in the active site. The active-site Schiff-base intermediate with substrate; via pyruvic acid; for decarboxylase activity is S254. Position 254 is a pyruvic acid (Ser); by autocatalysis (S254). The interval 294–322 (EVEPAPLPADEIKAEHDASPLVDNKKDDT) is disordered. Over residues 303-322 (DEIKAEHDASPLVDNKKDDT) the composition is skewed to basic and acidic residues.

Belongs to the phosphatidylserine decarboxylase family. PSD-B subfamily. Prokaryotic type I sub-subfamily. As to quaternary structure, heterodimer of a large membrane-associated beta subunit and a small pyruvoyl-containing alpha subunit. Pyruvate is required as a cofactor. Post-translationally, is synthesized initially as an inactive proenzyme. Formation of the active enzyme involves a self-maturation process in which the active site pyruvoyl group is generated from an internal serine residue via an autocatalytic post-translational modification. Two non-identical subunits are generated from the proenzyme in this reaction, and the pyruvate is formed at the N-terminus of the alpha chain, which is derived from the carboxyl end of the proenzyme. The autoendoproteolytic cleavage occurs by a canonical serine protease mechanism, in which the side chain hydroxyl group of the serine supplies its oxygen atom to form the C-terminus of the beta chain, while the remainder of the serine residue undergoes an oxidative deamination to produce ammonia and the pyruvoyl prosthetic group on the alpha chain. During this reaction, the Ser that is part of the protease active site of the proenzyme becomes the pyruvoyl prosthetic group, which constitutes an essential element of the active site of the mature decarboxylase.

The protein resides in the cell membrane. It carries out the reaction a 1,2-diacyl-sn-glycero-3-phospho-L-serine + H(+) = a 1,2-diacyl-sn-glycero-3-phosphoethanolamine + CO2. It participates in phospholipid metabolism; phosphatidylethanolamine biosynthesis; phosphatidylethanolamine from CDP-diacylglycerol: step 2/2. In terms of biological role, catalyzes the formation of phosphatidylethanolamine (PtdEtn) from phosphatidylserine (PtdSer). The sequence is that of Phosphatidylserine decarboxylase proenzyme from Salmonella paratyphi C (strain RKS4594).